Consider the following 140-residue polypeptide: Large ribosomal subunit protein bL17 (140 aa).

This sequence belongs to the bacterial ribosomal protein bL17 family. Part of the 50S ribosomal subunit. Contacts protein L32.

This Rhizobium leguminosarum bv. trifolii (strain WSM2304) protein is Large ribosomal subunit protein bL17.